Consider the following 329-residue polypeptide: Ribosomal protein L11 methyltransferase (329 aa).

The S-adenosyl-L-methionine site is built by Thr177, Gly198, Asp220, and Asn264.

It belongs to the methyltransferase superfamily. PrmA family.

The protein localises to the cytoplasm. It carries out the reaction L-lysyl-[protein] + 3 S-adenosyl-L-methionine = N(6),N(6),N(6)-trimethyl-L-lysyl-[protein] + 3 S-adenosyl-L-homocysteine + 3 H(+). Functionally, methylates ribosomal protein L11. This Helicobacter pylori (strain Shi470) protein is Ribosomal protein L11 methyltransferase.